Consider the following 825-residue polypeptide: Styryl dye vacuolar localization protein 3 (825 aa).

A coiled-coil region spans residues glutamine 366–glutamine 423. Serine 471 carries the post-translational modification Phosphoserine. Disordered stretches follow at residues proline 472–threonine 503 and arginine 538–proline 664. The span at valine 480–proline 489 shows a compositional bias: low complexity. Over residues leucine 490–threonine 503 the composition is skewed to polar residues. Threonine 496 carries the post-translational modification Phosphothreonine. Serine 551 is modified (phosphoserine). The span at proline 553–arginine 566 shows a compositional bias: polar residues. A compositionally biased stretch (low complexity) spans proline 604–proline 616. 2 stretches are compositionally biased toward polar residues: residues asparagine 631–methionine 645 and proline 652–proline 664. Phosphoserine is present on serine 662. Phosphothreonine is present on residues threonine 739 and threonine 756. Low complexity-rich tracts occupy residues threonine 750–threonine 759 and threonine 774–serine 788. The tract at residues threonine 750 to lysine 825 is disordered. Serine 757 carries the post-translational modification Phosphoserine. Residues glutamine 789–threonine 798 are compositionally biased toward polar residues. The segment covering glycine 809–lysine 825 has biased composition (basic residues).

This sequence belongs to the PAM1/SVL3 family.

It localises to the cytoplasm. It is found in the bud. The protein resides in the bud neck. The protein localises to the cell cortex. Its function is as follows. May have a vacuolar function. The sequence is that of Styryl dye vacuolar localization protein 3 (SVL3) from Saccharomyces cerevisiae (strain ATCC 204508 / S288c) (Baker's yeast).